Here is a 911-residue protein sequence, read N- to C-terminus: Nitrate reductase [NADH], clone PBNBR1405 (911 aa).

A disordered region spans residues 1–68; that stretch reads MATSVDNRHY…RFDSSDDEDE (68 aa). Basic and acidic residues predominate over residues 49–62; the sequence is KSVDKTTKEDRFDS. Residue C191 coordinates Mo-molybdopterin. Positions 539–614 constitute a Cytochrome b5 heme-binding domain; that stretch reads SKMYSMSEVR…LEDYRIGELI (76 aa). Heme contacts are provided by H574 and H597. An FAD-binding FR-type domain is found at 654-766; sequence REKVPVKLIE…KGPLGHIEYQ (113 aa). FAD contacts are provided by residues 706-709, 723-727, F728, F735, 740-742, and T793; these read RAYT, VIKVY, and LMS.

The protein belongs to the nitrate reductase family. As to quaternary structure, homodimer. FAD is required as a cofactor. Heme serves as cofactor. The cofactor is Mo-molybdopterin.

It catalyses the reaction nitrite + NAD(+) + H2O = nitrate + NADH + H(+). Nitrate reductase is a key enzyme involved in the first step of nitrate assimilation in plants, fungi and bacteria. The protein is Nitrate reductase [NADH], clone PBNBR1405 (NIA1) of Brassica napus (Rape).